Consider the following 360-residue polypeptide: DNA replication and repair protein RecF (360 aa).

33–40 (GENGSGKT) contributes to the ATP binding site.

The protein belongs to the RecF family.

The protein resides in the cytoplasm. In terms of biological role, the RecF protein is involved in DNA metabolism; it is required for DNA replication and normal SOS inducibility. RecF binds preferentially to single-stranded, linear DNA. It also seems to bind ATP. The chain is DNA replication and repair protein RecF from Rickettsia peacockii (strain Rustic).